Consider the following 393-residue polypeptide: Proteasome-activating nucleotidase (393 aa).

Positions 14–53 (SDEVQLVRLLEEKIKSLQIEIENLRKELNYYKAEMEKMLS) form a coiled coil. ATP is bound by residues 178–183 (GTGKTM) and Tyr317. A docks into pockets in the proteasome alpha-ring to cause gate opening region spans residues 391–393 (KYS).

The protein belongs to the AAA ATPase family. In terms of assembly, homohexamer. The hexameric complex has a two-ring architecture resembling a top hat that caps the 20S proteasome core at one or both ends. Upon ATP-binding, the C-terminus of PAN interacts with the alpha-rings of the proteasome core by binding to the intersubunit pockets.

It localises to the cytoplasm. ATPase which is responsible for recognizing, binding, unfolding and translocation of substrate proteins into the archaeal 20S proteasome core particle. Is essential for opening the gate of the 20S proteasome via an interaction with its C-terminus, thereby allowing substrate entry and access to the site of proteolysis. Thus, the C-termini of the proteasomal ATPase function like a 'key in a lock' to induce gate opening and therefore regulate proteolysis. Unfolding activity requires energy from ATP hydrolysis, whereas ATP binding alone promotes ATPase-20S proteasome association which triggers gate opening, and supports translocation of unfolded substrates. The protein is Proteasome-activating nucleotidase of Saccharolobus islandicus (strain Y.N.15.51 / Yellowstone #2) (Sulfolobus islandicus).